Here is a 381-residue protein sequence, read N- to C-terminus: (S)-scoulerine 9-O-methyltransferase (381 aa).

The S-adenosyl-L-methionine site is built by glycine 223, glutamate 246, aspartate 266, methionine 267, and lysine 280. The active-site Proton acceptor is the histidine 284.

Belongs to the class I-like SAM-binding methyltransferase superfamily. Cation-independent O-methyltransferase family. COMT subfamily.

It carries out the reaction (S)-scoulerine + S-adenosyl-L-methionine = (S)-tetrahydrocolumbamine + S-adenosyl-L-homocysteine + H(+). Its function is as follows. Produces a precursor of protoberberine alkaloids. In Coptis japonica (Japanese goldthread), this protein is (S)-scoulerine 9-O-methyltransferase (SMT).